Reading from the N-terminus, the 761-residue chain is Prolyl oligopeptidase A (761 aa).

Active-site charge relay system residues include Ser606, Asp690, and His726.

The protein belongs to the peptidase S9A family. Monomer.

The enzyme catalyses Hydrolysis of Pro-|-Xaa &gt;&gt; Ala-|-Xaa in oligopeptides.. Housekeeping prolyl oligopeptidase (POP) that behaves like a conventional POP by cleaving peptide bonds on the C-terminal side of prolyl residues within peptides that are up to approximately 30 amino acids long. The sequence is that of Prolyl oligopeptidase A from Amanita bisporigera (Destroying angel).